The sequence spans 118 residues: Myotrophin (118 aa).

3 ANK repeats span residues 1–30, 34–65, and 67–98; these read MGDK…DVNR, GGRK…NAAD, and HGIT…NVKG.

The protein belongs to the myotrophin family.

Its subcellular location is the cytoplasm. It is found in the nucleus. The protein localises to the perinuclear region. In terms of biological role, regulates NF-kappa-B transcription factor activity. Promotes growth of cardiomyocytes, but not cardiomyocyte proliferation. Promotes cardiac muscle hypertrophy. Plays a role in the regulation of the growth of actin filaments. Inhibits the activity of the F-actin-capping protein complex. This chain is Myotrophin (mtpn), found in Xenopus laevis (African clawed frog).